We begin with the raw amino-acid sequence, 83 residues long: MSSGGLFLLLGLLTLWEVLTPVSSKDRPKFCELPPDSGSCKGSFQAFYYHPVHRTCLEFIYGGCEGNDNNFKTIDECKRTCAA.

An N-terminal signal peptide occupies residues 1-24 (MSSGGLFLLLGLLTLWEVLTPVSS). Residues 31-81 (CELPPDSGSCKGSFQAFYYHPVHRTCLEFIYGGCEGNDNNFKTIDECKRTC) enclose the BPTI/Kunitz inhibitor domain. Intrachain disulfides connect Cys31-Cys81, Cys40-Cys64, and Cys56-Cys77.

It belongs to the venom Kunitz-type family. In terms of tissue distribution, expressed by the venom gland.

Its subcellular location is the secreted. Its function is as follows. Serine protease inhibitor. This chain is Kunitz-type serine protease inhibitor mulgin-2, found in Pseudechis australis (Mulga snake).